The sequence spans 129 residues: RutC family protein PM1466 (129 aa).

It belongs to the RutC family.

This chain is RutC family protein PM1466, found in Pasteurella multocida (strain Pm70).